We begin with the raw amino-acid sequence, 418 residues long: Voltage-gated ClC-type chloride channel ClcB (418 aa).

Over 1 to 4 (MFRR) the chain is Cytoplasmic. A helical transmembrane segment spans residues 5-25 (LLIATIVGILAAFAVAGFRHA). Residues 26 to 53 (MLLLEWLFLNNDSGSLVNAATNLSPWRR) are Periplasmic-facing. A helical membrane pass occupies residues 54-74 (LLTPALGGLAAGLLLMGWQKF). Residues 75-145 (TQQRPHAPTD…QRFTPRQEWK (71 aa)) lie on the Cytoplasmic side of the membrane. Residues 146–166 (LWIACGAAAGMAAAYRAPLAG) form a helical membrane-spanning segment. Residues 167–177 (SLFIAEVLFGT) lie on the Periplasmic side of the membrane. A helical membrane pass occupies residues 178–200 (MMLASLGPVIISAVVALLISNLI). Topologically, residues 201–221 (NHSDALLYSVQLSVTVQARDY) are cytoplasmic. A helical transmembrane segment spans residues 222-242 (ALIISTGVLAGLCGPLLLTLM). The Periplasmic segment spans residues 243–257 (NACHRGFVSLKLAPP). Residues 258 to 278 (WQLALGGLIVGLLSLFTPAVW) traverse the membrane as a helical segment. Residues 279-290 (GNGYSTVQSFLT) are Cytoplasmic-facing. The chain crosses the membrane as a helical span at residues 291–311 (APPLLMIIAGIFLCKLCAVLA). The Periplasmic portion of the chain corresponds to 312–315 (SSGS). The chain crosses the membrane as a helical span at residues 316–336 (GAPGGVFTPTLFIGLAIGMLY). Topologically, residues 337–351 (GRSLGLWLPDGEEIT) are cytoplasmic. A helical transmembrane segment spans residues 352–372 (LLLGLTGMATLLAATTHAPIM). The Periplasmic portion of the chain corresponds to 373–379 (STLMICE). Residues 380 to 400 (MTGEYQLLPGLLIACVIASVI) traverse the membrane as a helical segment. Residues 401–418 (SRTLHRDSIYRQHTAKHS) are Cytoplasmic-facing.

It belongs to the chloride channel (TC 2.A.49) family. ClcB subfamily.

It is found in the cell inner membrane. Its function is as follows. Probably acts as an electrical shunt for an outwardly-directed proton pump that is linked to amino acid decarboxylation, as part of the extreme acid resistance (XAR) response. This Escherichia coli O6:H1 (strain CFT073 / ATCC 700928 / UPEC) protein is Voltage-gated ClC-type chloride channel ClcB (clcB).